Consider the following 456-residue polypeptide: Proline--tRNA ligase (456 aa).

Belongs to the class-II aminoacyl-tRNA synthetase family. ProS type 3 subfamily. As to quaternary structure, homodimer.

The protein resides in the cytoplasm. It carries out the reaction tRNA(Pro) + L-proline + ATP = L-prolyl-tRNA(Pro) + AMP + diphosphate. Catalyzes the attachment of proline to tRNA(Pro) in a two-step reaction: proline is first activated by ATP to form Pro-AMP and then transferred to the acceptor end of tRNA(Pro). In Methanococcus aeolicus (strain ATCC BAA-1280 / DSM 17508 / OCM 812 / Nankai-3), this protein is Proline--tRNA ligase.